Here is a 123-residue protein sequence, read N- to C-terminus: Large ribosomal subunit protein bL12 (123 aa).

An N6-methyllysine modification is found at lysine 84. A disordered region spans residues proline 94–lysine 123. Over residues glycine 100 to glutamate 115 the composition is skewed to basic and acidic residues.

It belongs to the bacterial ribosomal protein bL12 family. In terms of assembly, homodimer. Part of the ribosomal stalk of the 50S ribosomal subunit. Forms a multimeric L10(L12)X complex, where L10 forms an elongated spine to which 2 to 4 L12 dimers bind in a sequential fashion. Binds GTP-bound translation factors.

In terms of biological role, seems to be the binding site for several of the factors involved in protein synthesis and appears to be essential for accurate translation. Its function is as follows. Forms part of the ribosomal stalk which helps the ribosome interact with GTP-bound translation factors. Is thus essential for accurate translation. The protein is Large ribosomal subunit protein bL12 of Halophilic eubacterium NRCC 41227.